A 61-amino-acid polypeptide reads, in one-letter code: Temporin-1Tb (61 aa).

A signal peptide spans 1–22; sequence MFTLKKSLLLLFFLGTINLSLC. Residues 23–44 constitute a propeptide that is removed on maturation; it reads EEERNAEEERRDEPDERDVQVE. Position 59 is a leucine amide (Leu-59).

This sequence belongs to the frog skin active peptide (FSAP) family. Temporin subfamily. As to quaternary structure, homo-oligomerizes in membranes as homodimers, homotrimers, or even homotetramers. Oligomerizes in presence of LPS. In Gram-positive bacterial mimetic membranes, the aggregation is weakly pronounced, and penetration proceeds more rapidly and is deeper than in Gram-negative bacterial mimetic membranes where aggregation is high. Homo-oligomerization is prevented by temporin-L. Expressed by the skin glands.

It is found in the secreted. It localises to the target cell membrane. The protein localises to the target cell. The protein resides in the target cell cytoplasm. Amphipathic alpha-helical antimicrobial peptide with potent activity against Gram-positive bacteria, weak activity against Gram-negative bacteria, and moderate activity against fungi. Mainly acts by causing membrane permeabilization, but is unable to forme pore-like openings. Is also able to penetrate eukaryotic cells (keratinocytes), and kill intracellular S.aureus (both wild-type and MRSA) without injuring host cells. Shows inhibitory effect on biofilm formation of Gram-positive bacteria, but not of Gram-negative bacteria. Shows antiviral activity against herpes simplex virus 1 (HSV-1) by disrupting the viral envelope. Also displays anti-leishmania activity by damaging parasite membrane. Does not show hemolytic activity. Acts synergistically with temporin-L that improves temporin-1Tb activity by preventing its self-association in lipopolysaccharides (LPS). In vitro, promotes cell migration and wound healing. This is Temporin-1Tb from Rana temporaria (European common frog).